Consider the following 117-residue polypeptide: MKYPLLALIKLYQWTISPLLGPVCKYYPSCSHYGYQAIDRHGAIKGTALTAWRILRCNPWSLGGVDHVPPRKRPRWHEMLRNAWRARKGGPSAAEPAIEGHIPSSPAAETPSHVQGA.

The interval Arg-87–Ala-117 is disordered.

It belongs to the UPF0161 family.

It localises to the cell membrane. Could be involved in insertion of integral membrane proteins into the membrane. This Streptomyces avermitilis (strain ATCC 31267 / DSM 46492 / JCM 5070 / NBRC 14893 / NCIMB 12804 / NRRL 8165 / MA-4680) protein is Putative membrane protein insertion efficiency factor.